The chain runs to 262 residues: Membrane protein US15 (262 aa).

The next 7 helical transmembrane spans lie at 46–66, 77–97, 108–128, 133–153, 163–183, 186–206, and 226–246; these read GAVGWQLAGLTALLSAFCYAA, CLTESSPSLVFVIPVTSVIFI, IGVLLFYTLLHVPPLIVICLC, LVISAALFTLLAFLSCTGVAL, QIVVIHALITLTFTAIVVVIL, GWSWCFKIVLSFSVLITCLAV, and LLAAVKVFLSLVFTLLMVLRI.

Belongs to the HHV-5 US12 protein family.

It is found in the host membrane. This is Membrane protein US15 (US15) from Human cytomegalovirus (strain Merlin) (HHV-5).